The primary structure comprises 462 residues: Glutamate--tRNA ligase 1 (462 aa).

Positions 8 to 18 (PSPTGYLHIGG) match the 'HIGH' region motif. Residues 237 to 241 (KLSKR) carry the 'KMSKS' region motif. Residue Lys-240 participates in ATP binding.

Belongs to the class-I aminoacyl-tRNA synthetase family. Glutamate--tRNA ligase type 1 subfamily. In terms of assembly, monomer.

The protein resides in the cytoplasm. The catalysed reaction is tRNA(Glu) + L-glutamate + ATP = L-glutamyl-tRNA(Glu) + AMP + diphosphate. Functionally, catalyzes the attachment of glutamate to tRNA(Glu) in a two-step reaction: glutamate is first activated by ATP to form Glu-AMP and then transferred to the acceptor end of tRNA(Glu). The protein is Glutamate--tRNA ligase 1 of Campylobacter hominis (strain ATCC BAA-381 / DSM 21671 / CCUG 45161 / LMG 19568 / NCTC 13146 / CH001A).